Reading from the N-terminus, the 256-residue chain is Ubiquinone/menaquinone biosynthesis C-methyltransferase UbiE (256 aa).

S-adenosyl-L-methionine contacts are provided by residues T79, D100, and 128–129 (DA).

It belongs to the class I-like SAM-binding methyltransferase superfamily. MenG/UbiE family.

It catalyses the reaction a 2-demethylmenaquinol + S-adenosyl-L-methionine = a menaquinol + S-adenosyl-L-homocysteine + H(+). The enzyme catalyses a 2-methoxy-6-(all-trans-polyprenyl)benzene-1,4-diol + S-adenosyl-L-methionine = a 5-methoxy-2-methyl-3-(all-trans-polyprenyl)benzene-1,4-diol + S-adenosyl-L-homocysteine + H(+). The protein operates within quinol/quinone metabolism; menaquinone biosynthesis; menaquinol from 1,4-dihydroxy-2-naphthoate: step 2/2. Its pathway is cofactor biosynthesis; ubiquinone biosynthesis. Functionally, methyltransferase required for the conversion of demethylmenaquinol (DMKH2) to menaquinol (MKH2) and the conversion of 2-polyprenyl-6-methoxy-1,4-benzoquinol (DDMQH2) to 2-polyprenyl-3-methyl-6-methoxy-1,4-benzoquinol (DMQH2). The polypeptide is Ubiquinone/menaquinone biosynthesis C-methyltransferase UbiE (Pseudomonas fluorescens (strain Pf0-1)).